The primary structure comprises 239 residues: Splicing factor U2AF 35 kDa subunit (239 aa).

At Ala2 the chain carries N-acetylalanine. The C3H1-type 1 zinc finger occupies 12-40; the sequence is EKDKVNCSFYFKIGACRHGDRCSRLHNKP. N6-methyllysine is present on Lys39. Phosphoserine is present on residues Ser61 and Ser145. Residues 65–147 enclose the RRM domain; the sequence is LRCAVSDVEM…QPIHAELSPV (83 aa). A C3H1-type 2 zinc finger spans residues 149–176; that stretch reads DFREACCRQYEMGECTRGGFCNFMHLKP. Omega-N-methylarginine is present on Arg165. Residues 183–239 form a disordered region; sequence RELYGRRRKKHRSRSRSRERRSRSRDRGRGGGGGGGGGGGRERDRRRSRDRERSGRF. Positions 188 to 208 are enriched in basic residues; sequence RRRKKHRSRSRSRERRSRSRD. Positions 212–221 are enriched in gly residues; that stretch reads GGGGGGGGGG. Positions 222–239 are enriched in basic and acidic residues; it reads GRERDRRRSRDRERSGRF.

This sequence belongs to the splicing factor SR family. Identified in the spliceosome C complex. Heterodimer with U2AF2. Interacts (via RS domain) with PHF5A (via N-terminus). Interacts with ZRANB2. Interacts with SDE2. Interacts with SF3B1. As to expression, expressed in primary spermatocytes and elongating spermatids (at protein level).

It localises to the nucleus. The protein resides in the nucleus speckle. Plays a critical role in both constitutive and enhancer-dependent splicing by mediating protein-protein interactions and protein-RNA interactions required for accurate 3'-splice site selection. Recruits U2 snRNP to the branch point. Directly mediates interactions between U2AF2 and proteins bound to the enhancers and thus may function as a bridge between U2AF2 and the enhancer complex to recruit it to the adjacent intron. This is Splicing factor U2AF 35 kDa subunit (U2af1) from Mus musculus (Mouse).